The following is a 96-amino-acid chain: Antigen H4 (96 aa).

The tract at residues 1 to 20 (EFQEEIKEGVEEHKHEDDPE) is disordered. N-linked (GlcNAc...) asparagine glycosylation is present at N34.

This Toxoplasma gondii protein is Antigen H4 (H4).